We begin with the raw amino-acid sequence, 191 residues long: uncharacterized protein (191 aa).

The region spanning G6–L66 is the HTH tetR-type domain. A DNA-binding region (H-T-H motif) is located at residues S29–I48.

This is an uncharacterized protein from Bacillus subtilis (strain 168).